The following is a 92-amino-acid chain: MARSLKKGPFVDDHLMTKIEKLNEADKKQVVKTWSRRSTIFPQFIGHTIAVYDGRKHVPVYISEDMVGHKLGEFAPTRTYKGHASDDKKTRR.

Belongs to the universal ribosomal protein uS19 family.

In terms of biological role, protein S19 forms a complex with S13 that binds strongly to the 16S ribosomal RNA. This Bacillus licheniformis (strain ATCC 14580 / DSM 13 / JCM 2505 / CCUG 7422 / NBRC 12200 / NCIMB 9375 / NCTC 10341 / NRRL NRS-1264 / Gibson 46) protein is Small ribosomal subunit protein uS19.